Consider the following 164-residue polypeptide: Cyclin-dependent kinase inhibitor 1 (164 aa).

An N-acetylserine modification is found at Ser2. Ser2 is covalently cross-linked (Glycyl serine ester (Ser-Gly) (interchain with G-Cter in ubiquitin)). The C4-type zinc finger occupies His13–Cys41. Positions Ala17–Pro24 are required for binding cyclins. The interval Phe53–Pro58 is required for binding CDKs. Residues Ala80–Pro164 are disordered. Position 114 is a phosphoserine; by GSK3-beta (Ser114). Residue Ser130 is modified to Phosphoserine. The PIP-box K+4 motif motif lies at Arg140–Pro164. Positions Lys141–Arg156 match the Nuclear localization signal motif. Thr145 is subject to Phosphothreonine; by PKA, PKB/AKT1, PIM1 and PIM2. The residue at position 146 (Ser146) is a Phosphoserine; by PKC and NUAK1. The segment at His152–Pro164 is interaction with TRIM39. Residues Ser153 to Pro164 show a composition bias toward basic residues. Phosphoserine is present on Ser160.

It belongs to the CDI family. In terms of assembly, interacts with HDAC1; the interaction is prevented by competitive binding of C10orf90/FATS to HDAC1 facilitating acetylation and protein stabilization of CDKN1A/p21. Interacts with MKRN1. Interacts with PSMA3. Interacts with PCNA. Component of the ternary complex, cyclin D-CDK4-CDKN1A. Interacts (via its N-terminal domain) with CDK4; the interaction promotes the assembly of the cyclin D-CDK4 complex, its nuclear translocation and promotes the cyclin D-dependent enzyme activity of CDK4. Binding to CDK2 leads to CDK2/cyclin E inactivation at the G1-S phase DNA damage checkpoint, thereby arresting cells at the G1-S transition during DNA repair. Interacts with PIM1. Interacts with STK11 and NUAK1. Interacts with DTL and TRIM39. Interacts with PKP3; the interaction sequesters CDKN1A to the cytoplasm thereby repressing its role as an inhibitor of CDK4- and CDK6-driven RB1 phosphorylation. Phosphorylation of Thr-145 by Akt or of Ser-146 by PKC impairs binding to PCNA. Phosphorylation at Ser-114 by GSK3-beta enhances ubiquitination by the DCX(DTL) complex. Phosphorylation of Thr-145 by PIM2 enhances protein stability and inhibits cell proliferation. Phosphorylation of Thr-145 by PIM1 results in the relocation of CDKN1A to the cytoplasm and enhanced CDKN1A protein stability. UV radiation-induced phosphorylation at Ser-146 by NUAK1 leads to its degradation. In terms of processing, ubiquitinated by MKRN1; leading to polyubiquitination and 26S proteasome-dependent degradation. Ubiquitinated by the DCX(DTL) complex, also named CRL4(CDT2) complex, leading to its degradation during S phase or following UV irradiation. Ubiquitination by the DCX(DTL) complex is essential to control replication licensing and is PCNA-dependent: interacts with PCNA via its PIP-box, while the presence of the containing the 'K+4' motif in the PIP box, recruit the DCX(DTL) complex, leading to its degradation. Ubiquitination at Ser-2 leads to degradation by the proteasome pathway. Ubiquitinated by RNF114; leading to proteasomal degradation. Post-translationally, acetylation leads to protein stability. Acetylated in vitro on Lys-141, Lys-154, Lys-161 and Lys-163. Deacetylation by HDAC1 is prevented by competitive binding of C10orf90/FATS to HDAC1.

It localises to the cytoplasm. The protein localises to the nucleus. May be involved in p53/TP53 mediated inhibition of cellular proliferation in response to DNA damage. Binds to and inhibits cyclin-dependent kinase activity, preventing phosphorylation of critical cyclin-dependent kinase substrates and blocking cell cycle progression. Functions in the nuclear localization and assembly of cyclin D-CDK4 complex and promotes its kinase activity towards RB1. At higher stoichiometric ratios, inhibits the kinase activity of the cyclin D-CDK4 complex. Inhibits DNA synthesis by DNA polymerase delta by competing with POLD3 for PCNA binding. Plays an important role in controlling cell cycle progression and DNA damage-induced G2 arrest. Negatively regulates the CDK4- and CDK6-driven phosphorylation of RB1 in keratinocytes, thereby resulting in the release of E2F1 and subsequent transcription of E2F1-driven G1/S phase promoting genes. The protein is Cyclin-dependent kinase inhibitor 1 (CDKN1A) of Felis catus (Cat).